The sequence spans 218 residues: Small ribosomal subunit protein uS3c (218 aa).

The KH type-2 domain occupies 47–118 (VQKNIRISSG…KLNIAITRIS (72 aa)).

It belongs to the universal ribosomal protein uS3 family. In terms of assembly, part of the 30S ribosomal subunit.

It is found in the plastid. The protein resides in the chloroplast. The polypeptide is Small ribosomal subunit protein uS3c (rps3) (Lepidium virginicum (Virginia pepperweed)).